The following is a 452-amino-acid chain: Tubulin gamma chain (452 aa).

142–148 (AGGTGSG) provides a ligand contact to GTP.

The protein belongs to the tubulin family.

It localises to the cytoplasm. Its subcellular location is the cytoskeleton. The protein localises to the microtubule organizing center. The protein resides in the centrosome. In terms of biological role, tubulin is the major constituent of microtubules. The gamma chain is found at microtubule organizing centers (MTOC) such as the spindle poles or the centrosome, suggesting that it is involved in the minus-end nucleation of microtubule assembly. The polypeptide is Tubulin gamma chain (G-TUB) (Plasmodium falciparum (isolate NF54)).